Consider the following 293-residue polypeptide: DNA-directed RNA polymerase III subunit RPC6 (293 aa).

Belongs to the eukaryotic RPC34/RPC39 RNA polymerase subunit family. Component of the RNA polymerase III (Pol III) complex consisting of 17 subunits.

The protein resides in the nucleus. Its function is as follows. DNA-dependent RNA polymerase catalyzes the transcription of DNA into RNA using the four ribonucleoside triphosphates as substrates. Specific peripheric component of RNA polymerase III which synthesizes small RNAs, such as 5S rRNA and tRNAs. This is DNA-directed RNA polymerase III subunit RPC6 from Drosophila melanogaster (Fruit fly).